Consider the following 400-residue polypeptide: tRNA (guanine-N(7)-)-methyltransferase (400 aa).

S-adenosyl-L-methionine is bound by residues Glu-124, Glu-149, and Asp-176. Substrate is bound at residue Asp-232.

Belongs to the class I-like SAM-binding methyltransferase superfamily. TrmB family.

It carries out the reaction guanosine(46) in tRNA + S-adenosyl-L-methionine = N(7)-methylguanosine(46) in tRNA + S-adenosyl-L-homocysteine. Its pathway is tRNA modification; N(7)-methylguanine-tRNA biosynthesis. In terms of biological role, catalyzes the formation of N(7)-methylguanine at position 46 (m7G46) in tRNA. The polypeptide is tRNA (guanine-N(7)-)-methyltransferase (Helicobacter pylori (strain J99 / ATCC 700824) (Campylobacter pylori J99)).